A 179-amino-acid polypeptide reads, in one-letter code: Large ribosomal subunit protein uL5 (179 aa).

Belongs to the universal ribosomal protein uL5 family. As to quaternary structure, part of the 50S ribosomal subunit; part of the 5S rRNA/L5/L18/L25 subcomplex. Contacts the 5S rRNA and the P site tRNA. Forms a bridge to the 30S subunit in the 70S ribosome.

Functionally, this is one of the proteins that bind and probably mediate the attachment of the 5S RNA into the large ribosomal subunit, where it forms part of the central protuberance. In the 70S ribosome it contacts protein S13 of the 30S subunit (bridge B1b), connecting the 2 subunits; this bridge is implicated in subunit movement. Contacts the P site tRNA; the 5S rRNA and some of its associated proteins might help stabilize positioning of ribosome-bound tRNAs. This Halalkalibacterium halodurans (strain ATCC BAA-125 / DSM 18197 / FERM 7344 / JCM 9153 / C-125) (Bacillus halodurans) protein is Large ribosomal subunit protein uL5.